A 795-amino-acid polypeptide reads, in one-letter code: Phenylalanine--tRNA ligase beta subunit (795 aa).

In terms of domain architecture, tRNA-binding spans 39–148 (AGAFHGVVVG…ADAPLGTDIR (110 aa)). Residues 401–476 (PARATIALRR…RVYGYNNIPN (76 aa)) enclose the B5 domain. Positions 454, 460, 463, and 464 each coordinate Mg(2+). Positions 701-794 (SRFPANRRDI…LKQRFQASLR (94 aa)) constitute an FDX-ACB domain.

The protein belongs to the phenylalanyl-tRNA synthetase beta subunit family. Type 1 subfamily. As to quaternary structure, tetramer of two alpha and two beta subunits. It depends on Mg(2+) as a cofactor.

The protein localises to the cytoplasm. The catalysed reaction is tRNA(Phe) + L-phenylalanine + ATP = L-phenylalanyl-tRNA(Phe) + AMP + diphosphate + H(+). This is Phenylalanine--tRNA ligase beta subunit (pheT) from Dickeya dadantii (strain 3937) (Erwinia chrysanthemi (strain 3937)).